A 504-amino-acid polypeptide reads, in one-letter code: Maturase K (504 aa).

It belongs to the intron maturase 2 family. MatK subfamily.

The protein localises to the plastid. It localises to the chloroplast. In terms of biological role, usually encoded in the trnK tRNA gene intron. Probably assists in splicing its own and other chloroplast group II introns. The chain is Maturase K from Actinidia deliciosa (Kiwi).